We begin with the raw amino-acid sequence, 261 residues long: DNA oxidative demethylase ALKBH2 (261 aa).

The tract at residues 1-57 is disordered; that stretch reads MDRFLVKGAQGGLLRKQEEQEPTGEEPAVLGGDKESTRKRPRREAPGNGGHSAGPSW. The short motif at 3–7 is the PCNA-binding element; sequence RFLVK. Residues 102-104 and 122-124 contribute to the substrate site; these read FGK and YTF. Residues 152–257 enclose the Fe2OG dioxygenase domain; sequence TFNFVLINRY…RVNLTFRKIL (106 aa). 3 residues coordinate 2-oxoglutarate: Asn-159, Tyr-161, and His-171. Fe cation is bound by residues His-171 and Asp-173. Asp-174 serves as a coordination point for substrate. The 2-oxoglutarate site is built by His-236, Arg-248, Thr-252, and Arg-254. Residue His-236 participates in Fe cation binding.

Belongs to the alkB family. As to quaternary structure, interacts with PCNA homotrimer; this interaction is enhanced during the S-phase of the cell cycle. Interacts with nucleolar proteins NCL, UBTF and NPM1. Interacts with XRCC5-XRCC6 heterodimer. The cofactor is Fe(2+). In terms of tissue distribution, detected in colon, small intestine, ovary, testis, prostate, skeletal muscle, heart, liver and urinary bladder.

Its subcellular location is the nucleus. It is found in the nucleolus. The protein resides in the nucleoplasm. The catalysed reaction is a methylated nucleobase within DNA + 2-oxoglutarate + O2 = a nucleobase within DNA + formaldehyde + succinate + CO2. It catalyses the reaction an N(1)-methyl-2'-deoxyadenosine in double-stranded DNA + 2-oxoglutarate + O2 = a 2'-deoxyadenosine in double-stranded DNA + formaldehyde + succinate + CO2 + H(+). The enzyme catalyses an N(1)-methyl-2'-deoxyadenosine in single-stranded DNA + 2-oxoglutarate + O2 = a 2'-deoxyadenosine in single-stranded DNA + formaldehyde + succinate + CO2 + H(+). It carries out the reaction an N(3)-methyl-2'-deoxycytidine in double-stranded DNA + 2-oxoglutarate + O2 = a 2'-deoxycytidine in double-stranded DNA + formaldehyde + succinate + CO2 + H(+). The catalysed reaction is an N(3)-methyl-2'-deoxycytidine in single-stranded DNA + 2-oxoglutarate + O2 = a 2'-deoxycytidine in single-stranded DNA + formaldehyde + succinate + CO2 + H(+). It catalyses the reaction a 1,N(6)-etheno-2'-deoxyadenosine in double-stranded DNA + 2-oxoglutarate + O2 + H2O = a 2'-deoxyadenosine in double-stranded DNA + glyoxal + succinate + CO2. The enzyme catalyses a 1,N(6)-etheno-2'-deoxyadenosine in single-stranded DNA + 2-oxoglutarate + O2 + H2O = a 2'-deoxyadenosine in single-stranded DNA + glyoxal + succinate + CO2. It carries out the reaction a 3,N(4)-etheno-2'-deoxycytidine in double-stranded DNA + 2-oxoglutarate + O2 + H2O = a 2'-deoxycytidine in double-stranded DNA + glyoxal + succinate + CO2. The catalysed reaction is a 3,N(4)-etheno-2'-deoxycytidine in single-stranded DNA + 2-oxoglutarate + O2 + H2O = a 2'-deoxycytidine in single-stranded DNA + glyoxal + succinate + CO2. It catalyses the reaction a 1,N(2)-etheno-2'-deoxyguanosine in double-stranded DNA + 2-oxoglutarate + O2 + H2O = a 2'-deoxyguanosine in double-stranded DNA + glyoxal + succinate + CO2. Its activity is regulated as follows. Activated by ascorbate and magnesium ions. Dioxygenase that repairs alkylated nucleic acid bases by direct reversal oxidative dealkylation. Can process both double-stranded (ds) and single-stranded (ss) DNA substrates, with a strong preference for dsDNA. Uses molecular oxygen, 2-oxoglutarate and iron as cofactors to oxidize the alkyl groups that are subsequently released as aldehydes, regenerating the undamaged bases. Probes the base pair stability, locates a weakened base pair and flips the damaged base to accommodate the lesion in its active site for efficient catalysis. Repairs monoalkylated bases, specifically N1-methyladenine and N3-methylcytosine, as well as higher order alkyl adducts such as bases modified with exocyclic bridged adducts known as etheno adducts including 1,N6-ethenoadenine, 3,N4-ethenocytosine and 1,N2-ethenoguanine. Acts as a gatekeeper of genomic integrity under alkylation stress. Efficiently repairs alkylated lesions in ribosomal DNA (rDNA). These lesions can cause ss- and dsDNA strand breaks that severely impair rDNA transcription. In a response mechanism to DNA damage, associates with PCNA at replication forks to repair alkylated adducts prior to replication. This Homo sapiens (Human) protein is DNA oxidative demethylase ALKBH2 (ALKBH2).